Here is a 198-residue protein sequence, read N- to C-terminus: Glycerol-3-phosphate acyltransferase (198 aa).

5 helical membrane-spanning segments follow: residues 2–22 (YAVLTAIIAYLIGCINNAYIL), 48–70 (LGYKAAAPVFALDVLKGVIAVLI), 75–97 (MGNTGAMIAGIAVVCGHNWPVFL), 111–131 (VVMTVSPLLGLIALAIGVTVI), and 154–174 (IFWNSTQIFIFSLILASLAIF).

Belongs to the PlsY family. As to quaternary structure, probably interacts with PlsX.

The protein localises to the cell membrane. The enzyme catalyses an acyl phosphate + sn-glycerol 3-phosphate = a 1-acyl-sn-glycero-3-phosphate + phosphate. It functions in the pathway lipid metabolism; phospholipid metabolism. Its function is as follows. Catalyzes the transfer of an acyl group from acyl-phosphate (acyl-PO(4)) to glycerol-3-phosphate (G3P) to form lysophosphatidic acid (LPA). This enzyme utilizes acyl-phosphate as fatty acyl donor, but not acyl-CoA or acyl-ACP. This is Glycerol-3-phosphate acyltransferase from Thermoanaerobacter pseudethanolicus (strain ATCC 33223 / 39E) (Clostridium thermohydrosulfuricum).